Reading from the N-terminus, the 307-residue chain is Methionyl-tRNA formyltransferase (307 aa).

108–111 (SLLP) provides a ligand contact to (6S)-5,6,7,8-tetrahydrofolate.

Belongs to the Fmt family.

It carries out the reaction L-methionyl-tRNA(fMet) + (6R)-10-formyltetrahydrofolate = N-formyl-L-methionyl-tRNA(fMet) + (6S)-5,6,7,8-tetrahydrofolate + H(+). In terms of biological role, attaches a formyl group to the free amino group of methionyl-tRNA(fMet). The formyl group appears to play a dual role in the initiator identity of N-formylmethionyl-tRNA by promoting its recognition by IF2 and preventing the misappropriation of this tRNA by the elongation apparatus. The polypeptide is Methionyl-tRNA formyltransferase (Xanthomonas campestris pv. campestris (strain 8004)).